Here is a 376-residue protein sequence, read N- to C-terminus: MKTELTLLEQTLTLHRFPKRNNETLQAWDAGDEYLIQHVEQLALPESSHIVIINDHFGTLSCWFSQKHKVSMMSDSYIAHQATQANLQQNQRPPVQLLTTLDPVPNDASVVLLQLPKSNRHLVWILSQLRKALSPNIPIIAVNKAKEIHTSTLNLFEKHLGPTTTSLAWKKHRLVFSSATVNPANEVNPECGWSIEPYAITLTNLPNVYSGESLDLGSRFILEHLPADPTLEDFIDLGCGNGVLSVRLGQLNPQAKITCVDESFMAIASAQKNLHDNLGKRDIHCIANNCLDGFPAHSSSMIVCNPPFHQQQTITDHIAWQMFCDSKHVLKKGGKLWVIGNRHLGYDVKLARLFGKSHVRVIANNSKFVILQAIKS.

It belongs to the methyltransferase superfamily. RlmG family.

It localises to the cytoplasm. It catalyses the reaction guanosine(1835) in 23S rRNA + S-adenosyl-L-methionine = N(2)-methylguanosine(1835) in 23S rRNA + S-adenosyl-L-homocysteine + H(+). Its function is as follows. Specifically methylates the guanine in position 1835 (m2G1835) of 23S rRNA. The sequence is that of Ribosomal RNA large subunit methyltransferase G from Vibrio cholerae serotype O1 (strain ATCC 39541 / Classical Ogawa 395 / O395).